The following is a 255-amino-acid chain: Microfibril-associated glycoprotein 4 (255 aa).

Positions 1 to 21 (MKALLALPLLLLLSTPPCAPQ) are cleaved as a signal peptide. A Cell attachment site motif is present at residues 26-28 (RGD). Residues 32–255 (RFCLQQPLDC…KRTEMKIRRA (224 aa)) enclose the Fibrinogen C-terminal domain. N-linked (GlcNAc...) asparagine glycosylation is found at N87 and N137.

In terms of assembly, homodimer. Can also form higher oligomers. Interacts with FBN1, FBN2 and LOX. Interacts with COL1A1 in a Ca (2+)-dependent manner. Interacts with ELN in a Ca (2+)-dependent manner; this interaction promotes ELN self-assembly.

Its subcellular location is the secreted. The protein localises to the extracellular space. It is found in the extracellular matrix. In terms of biological role, could be involved in calcium-dependent cell adhesion or intercellular interactions. May contribute to the elastic fiber assembly and/or maintenance. In Homo sapiens (Human), this protein is Microfibril-associated glycoprotein 4 (MFAP4).